Reading from the N-terminus, the 92-residue chain is Small ribosomal subunit protein uS19c (92 aa).

The protein belongs to the universal ribosomal protein uS19 family.

The protein localises to the plastid. The protein resides in the chloroplast. Protein S19 forms a complex with S13 that binds strongly to the 16S ribosomal RNA. The polypeptide is Small ribosomal subunit protein uS19c (Angiopteris evecta (Mule's foot fern)).